A 341-amino-acid polypeptide reads, in one-letter code: 4-hydroxy-2-oxovalerate aldolase (341 aa).

In terms of domain architecture, Pyruvate carboxyltransferase spans 9–259; that stretch reads VRITEVCLRD…KLDIDLYKMM (251 aa). 17-18 serves as a coordination point for substrate; that stretch reads RD. A Mn(2+)-binding site is contributed by Asp18. The active-site Proton acceptor is the His21. Positions 171 and 198 each coordinate substrate. Mn(2+) is bound by residues His198 and His200. Tyr289 contributes to the substrate binding site.

This sequence belongs to the 4-hydroxy-2-oxovalerate aldolase family.

The enzyme catalyses (S)-4-hydroxy-2-oxopentanoate = acetaldehyde + pyruvate. This Bacillus thuringiensis (strain Al Hakam) protein is 4-hydroxy-2-oxovalerate aldolase.